Reading from the N-terminus, the 388-residue chain is Chorismate synthase (388 aa).

The NADP(+) site is built by Arg-39 and Arg-45. Residues 130 to 132 (RSS), 251 to 252 (NA), Gly-296, 311 to 315 (KPIPT), and Arg-337 contribute to the FMN site.

It belongs to the chorismate synthase family. In terms of assembly, homotetramer. FMNH2 serves as cofactor.

The catalysed reaction is 5-O-(1-carboxyvinyl)-3-phosphoshikimate = chorismate + phosphate. It functions in the pathway metabolic intermediate biosynthesis; chorismate biosynthesis; chorismate from D-erythrose 4-phosphate and phosphoenolpyruvate: step 7/7. In terms of biological role, catalyzes the anti-1,4-elimination of the C-3 phosphate and the C-6 proR hydrogen from 5-enolpyruvylshikimate-3-phosphate (EPSP) to yield chorismate, which is the branch point compound that serves as the starting substrate for the three terminal pathways of aromatic amino acid biosynthesis. This reaction introduces a second double bond into the aromatic ring system. This chain is Chorismate synthase, found in Streptococcus pyogenes serotype M12 (strain MGAS2096).